Here is a 150-residue protein sequence, read N- to C-terminus: AVQLVFTDAEKAEFKFGFKSKDGDNSITAKELGEFLESAGKSFSEEQLAQMISDVDTDKSGTIEFSEMLMGIAEKMMKWTWKKSHFQKAFDDMDKDGNGVLSPEELHLAMSTRIEPPMSKEAIDAIIAKADCDGDGKINRKEFVKLIKSS.

Alanine 1 carries the post-translational modification N-acetylalanine. EF-hand domains follow at residues threonine 7–serine 42, phenylalanine 43–lysine 78, tryptophan 81–proline 116, and methionine 118–serine 150. Residues aspartate 22, aspartate 24, serine 26, threonine 28, aspartate 56, aspartate 58, serine 60, threonine 62, glutamate 67, aspartate 94, aspartate 96, asparagine 98, glutamate 105, aspartate 131, aspartate 133, aspartate 135, lysine 137, and glutamate 142 each coordinate Ca(2+).

The protein localises to the nucleus. The protein resides in the cytoplasm. Its subcellular location is the cytoskeleton. It localises to the spindle. Its function is as follows. May play an important role in mitosis of sea urchin egg. May function as a Ca(2+)-dependent intracellular modulator of microtubule assembly. This chain is 15 kDa calcium-binding protein, found in Hemicentrotus pulcherrimus (Sea urchin).